Reading from the N-terminus, the 219-residue chain is uncharacterized protein (219 aa).

Positions 1 to 15 (MYVLFLLSWVLVAGA) are cleaved as a signal peptide. N118 is a glycosylation site (N-linked (GlcNAc...) asparagine). Residues 138–174 (GEVGEDPGKRARKRRLGLPIGEPGEDVGKRMRQRQQG) are disordered.

In terms of tissue distribution, component of the acid-insoluble and acid-soluble organic matrix of calcified layers of the shell (at protein level).

The protein resides in the secreted. This is an uncharacterized protein from Lottia gigantea (Giant owl limpet).